The following is an 82-amino-acid chain: MSSAWTLSPEPLPPSTGPPVGAGLDVEQRTVFAFVLCLLVVLVLLMVRCVRILLDPYSRMPASSWTDHKEALERGQFDYALV.

Positions 1–20 are disordered; sequence MSSAWTLSPEPLPPSTGPPV. The helical transmembrane segment at 30 to 50 threads the bilayer; sequence TVFAFVLCLLVVLVLLMVRCV.

It belongs to the cortexin family.

The protein resides in the membrane. In terms of biological role, may mediate extracellular or intracellular signaling of cortical neurons during forebrain development. This chain is Cortexin-1 (Ctxn1), found in Mus musculus (Mouse).